A 322-amino-acid polypeptide reads, in one-letter code: tRNA-dihydrouridine synthase B (322 aa).

Residues 16–18 (PMA) and Q70 each bind FMN. C100 serves as the catalytic Proton donor. Residues K139, 200–202 (NGD), and 224–225 (GR) contribute to the FMN site.

It belongs to the Dus family. DusB subfamily. The cofactor is FMN.

The catalysed reaction is a 5,6-dihydrouridine in tRNA + NAD(+) = a uridine in tRNA + NADH + H(+). It catalyses the reaction a 5,6-dihydrouridine in tRNA + NADP(+) = a uridine in tRNA + NADPH + H(+). In terms of biological role, catalyzes the synthesis of 5,6-dihydrouridine (D), a modified base found in the D-loop of most tRNAs, via the reduction of the C5-C6 double bond in target uridines. In Vibrio parahaemolyticus serotype O3:K6 (strain RIMD 2210633), this protein is tRNA-dihydrouridine synthase B.